Here is a 438-residue protein sequence, read N- to C-terminus: Ammonium transporter Rh type A (438 aa).

The Cytoplasmic portion of the chain corresponds to 1 to 4 (MRFK). Residues 5 to 25 (FPLMAISLEVAMIVLFGLFVE) form a helical membrane-spanning segment. Topologically, residues 26–61 (YETPQNASQKNASHQNASQQGNTSSSAKKDQFFQLY) are extracellular. Asn31, Asn36, Asn41, and Asn47 each carry an N-linked (GlcNAc...) asparagine glycan. A helical transmembrane segment spans residues 62–82 (PLFQDVHVMIFVGFGFLMTFL). The Cytoplasmic segment spans residues 83-86 (KKYG). A helical membrane pass occupies residues 87-107 (FSGVGFNLFLAALGLQWGTIM). Over 108 to 121 (QGLLHSHGKEFHFG) the chain is Extracellular. A helical transmembrane segment spans residues 122 to 142 (IYNMINADFSTATVLISFGAV). Over 143-148 (LGKTSP) the chain is Cytoplasmic. Residues 149-169 (IQMLIMTILEIAVFAGNEYLV) traverse the membrane as a helical segment. The Extracellular segment spans residues 170–178 (TELFEASDT). The helical transmembrane segment at 179–199 (GASMTIHAFGAYFGLAVAGVL) threads the bilayer. The Cytoplasmic segment spans residues 200 to 218 (YRPGLRCEHPNDESVYHSD). A helical transmembrane segment spans residues 219–239 (LFAMIGTLFLWIFWPSFNSAI). Residues 240-249 (ADPGDHQYRA) are Extracellular-facing. A helical transmembrane segment spans residues 250-270 (IVNTYMSLAACVITAYALSSL). Residues 271-278 (VERRGRLD) lie on the Cytoplasmic side of the membrane. A helical membrane pass occupies residues 279 to 296 (MVHIQNATLAGGVAVGTC). At 297-300 (ADME) the chain is on the extracellular side. A helical membrane pass occupies residues 301-321 (IPLYAAMTIGSIAGIISVLGY). At 322 to 342 (KFFSPLLANKLMIHDTCGVHN) the chain is on the cytoplasmic side. Residues 343 to 363 (LHGLPGVFGGLASIVAISWGM) form a helical membrane-spanning segment. The Extracellular segment spans residues 364–372 (STASMAMQA). The helical transmembrane segment at 373 to 393 (AALGSSIGSAIVGGLLTGLIL) threads the bilayer. The Cytoplasmic segment spans residues 394 to 438 (KLPIWNQPPDEYCYDDSVSWKVPKFRELDNRFFQHANHNHVEHEV).

This sequence belongs to the ammonium transporter (TC 2.A.49) family. Rh subfamily. Homodimer. Heterotrimer; a RHCE monomer interacts with a RHAG homodimer. Component of the ankyrin-1 complex in the erythrocyte, composed of ANK1, RHCE, RHAG, SLC4A1, EPB42, GYPA, GYPB and AQP1. Interacts with GYPB (via the N-terminal); this interaction bridges the (RHAG)2(RHCE) heterotrimer with the SLC4A1 Band 3 I dimer complexed with GYPA. In terms of processing, glycosylated.

It is found in the membrane. It catalyses the reaction methylamine(out) = methylamine(in). The catalysed reaction is NH4(+)(in) = NH4(+)(out). It carries out the reaction CO2(out) = CO2(in). In terms of biological role, component of the ankyrin-1 complex, a multiprotein complex involved in the stability and shape of the erythrocyte membrane. Heterotrimer with RHCE (RHAG)2(RHCE), that transports ammonium and its related derivative methylammonium, in both neutral and ionic forms, across the erythrocyte membrane. The transport of NH4(+) is electrogenic and masks the NH3 transport. Also, may act as a CO2 channel. Moreover in erythrocyte, regulates RHD membrane expression and is associated with rhesus blood group antigen expression. This chain is Ammonium transporter Rh type A, found in Mus musculus (Mouse).